The chain runs to 286 residues: Bifunctional protein FolD (286 aa).

An NADP(+)-binding site is contributed by 166–168 (GAS).

The protein belongs to the tetrahydrofolate dehydrogenase/cyclohydrolase family. In terms of assembly, homodimer.

It catalyses the reaction (6R)-5,10-methylene-5,6,7,8-tetrahydrofolate + NADP(+) = (6R)-5,10-methenyltetrahydrofolate + NADPH. The catalysed reaction is (6R)-5,10-methenyltetrahydrofolate + H2O = (6R)-10-formyltetrahydrofolate + H(+). Its pathway is one-carbon metabolism; tetrahydrofolate interconversion. In terms of biological role, catalyzes the oxidation of 5,10-methylenetetrahydrofolate to 5,10-methenyltetrahydrofolate and then the hydrolysis of 5,10-methenyltetrahydrofolate to 10-formyltetrahydrofolate. The sequence is that of Bifunctional protein FolD from Idiomarina loihiensis (strain ATCC BAA-735 / DSM 15497 / L2-TR).